A 321-amino-acid chain; its full sequence is Lipoyl synthase (321 aa).

Cys68, Cys73, Cys79, Cys94, Cys98, Cys101, and Ser308 together coordinate [4Fe-4S] cluster. The 218-residue stretch at 80–297 (FNHGTATFMI…KEIALELGFT (218 aa)) folds into the Radical SAM core domain.

Belongs to the radical SAM superfamily. Lipoyl synthase family. [4Fe-4S] cluster is required as a cofactor.

It localises to the cytoplasm. It carries out the reaction [[Fe-S] cluster scaffold protein carrying a second [4Fe-4S](2+) cluster] + N(6)-octanoyl-L-lysyl-[protein] + 2 oxidized [2Fe-2S]-[ferredoxin] + 2 S-adenosyl-L-methionine + 4 H(+) = [[Fe-S] cluster scaffold protein] + N(6)-[(R)-dihydrolipoyl]-L-lysyl-[protein] + 4 Fe(3+) + 2 hydrogen sulfide + 2 5'-deoxyadenosine + 2 L-methionine + 2 reduced [2Fe-2S]-[ferredoxin]. It participates in protein modification; protein lipoylation via endogenous pathway; protein N(6)-(lipoyl)lysine from octanoyl-[acyl-carrier-protein]: step 2/2. Its function is as follows. Catalyzes the radical-mediated insertion of two sulfur atoms into the C-6 and C-8 positions of the octanoyl moiety bound to the lipoyl domains of lipoate-dependent enzymes, thereby converting the octanoylated domains into lipoylated derivatives. The polypeptide is Lipoyl synthase (Vibrio atlanticus (strain LGP32) (Vibrio splendidus (strain Mel32))).